A 181-amino-acid chain; its full sequence is Oligoribonuclease (181 aa).

Residues 8–171 enclose the Exonuclease domain; sequence LIWIDLEMTG…DDIRESVAEL (164 aa). The active site involves Tyr129.

Belongs to the oligoribonuclease family.

Its subcellular location is the cytoplasm. Functionally, 3'-to-5' exoribonuclease specific for small oligoribonucleotides. This chain is Oligoribonuclease, found in Sodalis glossinidius (strain morsitans).